The chain runs to 1183 residues: DNA-directed RNA polymerase subunit beta (1183 aa).

It belongs to the RNA polymerase beta chain family. In terms of assembly, the RNAP catalytic core consists of 2 alpha, 1 beta, 1 beta' and 1 omega subunit. When a sigma factor is associated with the core the holoenzyme is formed, which can initiate transcription.

It catalyses the reaction RNA(n) + a ribonucleoside 5'-triphosphate = RNA(n+1) + diphosphate. Its function is as follows. DNA-dependent RNA polymerase catalyzes the transcription of DNA into RNA using the four ribonucleoside triphosphates as substrates. The chain is DNA-directed RNA polymerase subunit beta from Staphylococcus aureus (strain MRSA252).